An 84-amino-acid polypeptide reads, in one-letter code: Beta-mammal Tt1g (84 aa).

The signal sequence occupies residues 1 to 20; it reads MKGMILFISCILLIGIVVEC. The 62-residue stretch at 21 to 82 folds into the LCN-type CS-alpha/beta domain; sequence KEGYLMDHEG…VWERATNRCG (62 aa). Cystine bridges form between cysteine 31–cysteine 81, cysteine 35–cysteine 57, cysteine 43–cysteine 62, and cysteine 47–cysteine 64. Position 81 is a cysteine amide (cysteine 81).

The protein belongs to the long (4 C-C) scorpion toxin superfamily. Sodium channel inhibitor family. Beta subfamily. As to expression, expressed by the venom gland.

Its subcellular location is the secreted. Its function is as follows. Beta toxins modify sodium channel function in two ways: an excitatory effect (shifting the activation process to more negative potential) and/or a depressant effect (reducing the peak current). At concentration of 500 nM this toxin produces channel opening at more negative potentials in hNav1.2/SCN2A and hNav1.3/SCN3A, which shows the biggest effect. On the other hand the peak current is decreased in hNav1.4/SCN4A and hNav1.5/SCN5A channels, without apparent modification of the activation gate. This toxin is active against mammals. The polypeptide is Beta-mammal Tt1g (Tityus trivittatus (Argentinean scorpion)).